Consider the following 368-residue polypeptide: tRNA-specific 2-thiouridylase MnmA (368 aa).

ATP is bound by residues 12–19 (AMSGGVDS) and Met-38. Residues 98–100 (NPD) are interaction with target base in tRNA. Cys-103 serves as the catalytic Nucleophile. A disulfide bridge links Cys-103 with Cys-200. Residue Gly-128 coordinates ATP. Residues 150 to 152 (KDQ) form an interaction with tRNA region. Residue Cys-200 is the Cysteine persulfide intermediate of the active site. The tract at residues 312–313 (RY) is interaction with tRNA.

The protein belongs to the MnmA/TRMU family. As to quaternary structure, interacts with TusE.

The protein localises to the cytoplasm. The enzyme catalyses S-sulfanyl-L-cysteinyl-[protein] + uridine(34) in tRNA + AH2 + ATP = 2-thiouridine(34) in tRNA + L-cysteinyl-[protein] + A + AMP + diphosphate + H(+). Its function is as follows. Catalyzes the 2-thiolation of uridine at the wobble position (U34) of tRNA(Lys), tRNA(Glu) and tRNA(Gln), leading to the formation of s(2)U34, the first step of tRNA-mnm(5)s(2)U34 synthesis. Sulfur is provided by IscS, via a sulfur-relay system. Binds ATP and its substrate tRNAs. The chain is tRNA-specific 2-thiouridylase MnmA from Buchnera aphidicola subsp. Acyrthosiphon pisum (strain APS) (Acyrthosiphon pisum symbiotic bacterium).